We begin with the raw amino-acid sequence, 592 residues long: Catabolite repression protein creC (592 aa).

A disordered region spans residues 119 to 140 (NSALAAAPVKDPSKKRKPKNNI). WD repeat units lie at residues 248 to 288 (INSS…ALFI), 327 to 368 (LANQ…DVFR), 369 to 408 (SYYG…IIAR), and 411 to 455 (GHDS…LHRP). Disordered regions lie at residues 459-513 (HQTS…HPVE) and 556-592 (WDRP…MGSL). Composition is skewed to polar residues over residues 484–499 (SSGN…TAAD) and 564–576 (SDNY…SETL). A WD 5 repeat occupies 529–566 (VGEDPICWLGFQEDTIMTSSLEGHIRTWDRPRENISDN).

Belongs to the WD repeat creC family. As to quaternary structure, interacts with creB.

Its function is as follows. Component of the regulatory network controlling carbon source utilization through ubiquitination and deubiquitination involving creA, creB, creC, creD and acrB. Required to prevent the proteolysis of the CreB deubiquitinating enzyme in the absence of carbon catabolite repression. CreB deubiquitinating enzyme stabilized in a complex with the CreC leads to the expression of genes such as those in the proline and quinate pathways. This Emericella nidulans (strain FGSC A4 / ATCC 38163 / CBS 112.46 / NRRL 194 / M139) (Aspergillus nidulans) protein is Catabolite repression protein creC (creC).